The following is a 579-amino-acid chain: Isocitrate dehydrogenase kinase/phosphatase (579 aa).

ATP contacts are provided by residues 324–330 and Lys345; that span reads ADGTPGM. The active site involves Asp380.

The protein belongs to the AceK family.

It is found in the cytoplasm. The enzyme catalyses L-seryl-[isocitrate dehydrogenase] + ATP = O-phospho-L-seryl-[isocitrate dehydrogenase] + ADP + H(+). Functionally, bifunctional enzyme which can phosphorylate or dephosphorylate isocitrate dehydrogenase (IDH) on a specific serine residue. This is a regulatory mechanism which enables bacteria to bypass the Krebs cycle via the glyoxylate shunt in response to the source of carbon. When bacteria are grown on glucose, IDH is fully active and unphosphorylated, but when grown on acetate or ethanol, the activity of IDH declines drastically concomitant with its phosphorylation. The sequence is that of Isocitrate dehydrogenase kinase/phosphatase from Xanthomonas euvesicatoria pv. vesicatoria (strain 85-10) (Xanthomonas campestris pv. vesicatoria).